The primary structure comprises 734 residues: Photosystem I P700 chlorophyll a apoprotein A2 (734 aa).

The next 8 helical transmembrane spans lie at 46–69, 135–158, 175–199, 273–291, 330–353, 369–395, 417–439, and 517–535; these read IFASHFGQLAIIFLWTSGNLFHVA, LYTGALFLLFLSAISLIGGWLHLQ, LNHHLSGLFGVSSLAWTGHLVHVAI, IAHHHLAIAILFLIAGHMY, IHFQLGLALASLGVITSLVAQHMY, AALYTHHQYIAGFIMTGAFAHGAIFFI, AIISHLSWASLFLGFHTLGLYVH, and FLVHHAIALGLHTTTLILV. The [4Fe-4S] cluster site is built by Cys-559 and Cys-568. A run of 2 helical transmembrane segments spans residues 575 to 596 and 643 to 665; these read AFYLAVFWMLNTIGWVTFYWHW and LSVWAWMFLFGHLVWATGFMFLI. 3 residues coordinate chlorophyll a: His-654, Met-662, and Tyr-670. Trp-671 is a binding site for phylloquinone. Residues 707–727 form a helical membrane-spanning segment; it reads LVGLAHFSVGYIFTYAAFLIA.

Belongs to the PsaA/PsaB family. As to quaternary structure, the PsaA/B heterodimer binds the P700 chlorophyll special pair and subsequent electron acceptors. PSI consists of a core antenna complex that captures photons, and an electron transfer chain that converts photonic excitation into a charge separation. The eukaryotic PSI reaction center is composed of at least 11 subunits. P700 is a chlorophyll a/chlorophyll a' dimer, A0 is one or more chlorophyll a, A1 is one or both phylloquinones and FX is a shared 4Fe-4S iron-sulfur center. serves as cofactor.

The protein localises to the plastid. It is found in the chloroplast thylakoid membrane. The catalysed reaction is reduced [plastocyanin] + hnu + oxidized [2Fe-2S]-[ferredoxin] = oxidized [plastocyanin] + reduced [2Fe-2S]-[ferredoxin]. Functionally, psaA and PsaB bind P700, the primary electron donor of photosystem I (PSI), as well as the electron acceptors A0, A1 and FX. PSI is a plastocyanin-ferredoxin oxidoreductase, converting photonic excitation into a charge separation, which transfers an electron from the donor P700 chlorophyll pair to the spectroscopically characterized acceptors A0, A1, FX, FA and FB in turn. Oxidized P700 is reduced on the lumenal side of the thylakoid membrane by plastocyanin. This Aethionema grandiflorum (Persian stone-cress) protein is Photosystem I P700 chlorophyll a apoprotein A2.